The chain runs to 107 residues: Cell division protein FtsB (107 aa).

Residues 1–3 lie on the Cytoplasmic side of the membrane; the sequence is MGK. Residues 4-21 form a helical membrane-spanning segment; it reads LTLLLLILLGWLQYSLWL. Residues 22-107 lie on the Periplasmic side of the membrane; sequence GKNGVHDFVR…IPSTQNNAQQ (86 aa). The stretch at 39-62 forms a coiled coil; it reads QEVNNGKLKARNDQLFAEIDDLNG.

Belongs to the FtsB family. Part of a complex composed of FtsB, FtsL and FtsQ.

The protein resides in the cell inner membrane. Functionally, essential cell division protein. May link together the upstream cell division proteins, which are predominantly cytoplasmic, with the downstream cell division proteins, which are predominantly periplasmic. This is Cell division protein FtsB from Yersinia enterocolitica serotype O:8 / biotype 1B (strain NCTC 13174 / 8081).